A 433-amino-acid polypeptide reads, in one-letter code: Monodehydroascorbate reductase (433 aa).

FAD-binding positions include 12–15 (GGVS), glutamate 39, arginine 46, lysine 51, isoleucine 94, and 145–146 (RE). NAD(+) contacts are provided by residues 170–176 (GGYIGLE), glutamate 194, arginine 200, and glycine 259. Position 172–176 (172–176 (YIGLE)) interacts with NADP(+). Residues arginine 200 and glycine 259 each contribute to the NADP(+) site. Residue aspartate 296 coordinates FAD. 312 to 313 (EH) contributes to the NAD(+) binding site. An NADP(+)-binding site is contributed by 312–313 (EH). Valine 314 provides a ligand contact to FAD. Arginine 318 lines the L-ascorbate pocket. Tyrosine 347 is an FAD binding site. Tyrosine 347 contributes to the NAD(+) binding site. Tyrosine 347 contacts NADP(+). Position 349 (arginine 349) interacts with L-ascorbate.

It belongs to the FAD-dependent oxidoreductase family. The cofactor is FAD. Expressed at relatively low levels in all tissues examined.

The protein resides in the cytoplasm. It catalyses the reaction 2 monodehydro-L-ascorbate radical + NADH + H(+) = 2 L-ascorbate + NAD(+). Functionally, catalyzes the conversion of monodehydroascorbate to ascorbate, oxidizing NADH in the process. The chain is Monodehydroascorbate reductase from Pisum sativum (Garden pea).